The primary structure comprises 420 residues: Tyrosine--tRNA ligase (420 aa).

Tyr33 lines the L-tyrosine pocket. The 'HIGH' region signature appears at 38-47; that stretch reads PTADSLHVGH. Residues Tyr167 and Gln171 each contribute to the L-tyrosine site. A 'KMSKS' region motif is present at residues 227–231; it reads KFGKT. Lys230 lines the ATP pocket. Residues 353–419 form the S4 RNA-binding domain; sequence LTVADLLVKV…GKRNYALVKV (67 aa).

Belongs to the class-I aminoacyl-tRNA synthetase family. TyrS type 1 subfamily. As to quaternary structure, homodimer.

The protein resides in the cytoplasm. The catalysed reaction is tRNA(Tyr) + L-tyrosine + ATP = L-tyrosyl-tRNA(Tyr) + AMP + diphosphate + H(+). In terms of biological role, catalyzes the attachment of tyrosine to tRNA(Tyr) in a two-step reaction: tyrosine is first activated by ATP to form Tyr-AMP and then transferred to the acceptor end of tRNA(Tyr). This is Tyrosine--tRNA ligase from Anaeromyxobacter dehalogenans (strain 2CP-1 / ATCC BAA-258).